Here is a 117-residue protein sequence, read N- to C-terminus: Putative phosphotransferase enzyme IIB component MPN_268 (117 aa).

Residues 1–21 form a helical membrane-spanning segment; that stretch reads MKVLLWIGYVLSFGLLYLYLV. The 76-residue stretch at 42-117 folds into the PTS EIIB type-1 domain; that stretch reads PFAVRDFIAA…QLKQQIENER (76 aa).

The protein localises to the membrane. In terms of biological role, the phosphoenolpyruvate-dependent sugar phosphotransferase system (PTS), a major carbohydrate active -transport system, catalyzes the phosphorylation of incoming sugar substrates concomitant with their translocation across the cell membrane. This chain is Putative phosphotransferase enzyme IIB component MPN_268, found in Mycoplasma pneumoniae (strain ATCC 29342 / M129 / Subtype 1) (Mycoplasmoides pneumoniae).